The primary structure comprises 243 residues: Cell division protein ZipA (243 aa).

The Periplasmic portion of the chain corresponds to 1 to 4 (MSDV). Residues 5-25 (TLLRIGIAIVGILFVAAVFFF) traverse the membrane as a helical segment. Topologically, residues 26–243 (STPKTSAHRV…VPPLIKNSRW (218 aa)) are cytoplasmic. Residues 32-89 (AHRVRTKKEEPPRERREPMLSTEADNSPPQGVDEVPASVSQQQVNPEANKPGEVQLGK) are disordered. Residues 38–49 (KKEEPPRERREP) show a composition bias toward basic and acidic residues.

It belongs to the ZipA family. As to quaternary structure, interacts with FtsZ via their C-terminal domains.

It localises to the cell inner membrane. Functionally, essential cell division protein that stabilizes the FtsZ protofilaments by cross-linking them and that serves as a cytoplasmic membrane anchor for the Z ring. Also required for the recruitment to the septal ring of downstream cell division proteins. The protein is Cell division protein ZipA of Xylella fastidiosa (strain 9a5c).